We begin with the raw amino-acid sequence, 358 residues long: Variant-surface-glycoprotein phospholipase C (358 aa).

Residues 25 to 198 (IGQVYMVGAH…STRRIFLVVR (174 aa)) form the PI-PLC X-box domain.

As to quaternary structure, monomer. In terms of processing, the N-terminus is blocked.

The protein localises to the membrane. It carries out the reaction a 6-(alpha-D-glucosaminyl)-1-(1,2-diacyl-sn-glycero-3-phospho)-1D-myo-inositol = 6-(alpha-D-glucosaminyl)-1D-myo-inositol 1,2-cyclic phosphate + a 1,2-diacyl-sn-glycerol. Functionally, by hydrolysis of the attached glycolipid, releases soluble variant surface glycoprotein containing phosphoinositol from the cell wall of T.brucei after cell lysis. It also cleaves similar membrane anchors on some mammalian proteins. VSG lipase may play a role in processes such as parasite differentiation or antigenic variation. The polypeptide is Variant-surface-glycoprotein phospholipase C (Trypanosoma brucei brucei).